The primary structure comprises 212 residues: Cytidylate kinase (212 aa).

9–17 (GPAAAGKGT) contacts ATP.

Belongs to the cytidylate kinase family. Type 1 subfamily.

The protein localises to the cytoplasm. The catalysed reaction is CMP + ATP = CDP + ADP. It carries out the reaction dCMP + ATP = dCDP + ADP. The sequence is that of Cytidylate kinase from Rhizobium meliloti (strain 1021) (Ensifer meliloti).